We begin with the raw amino-acid sequence, 259 residues long: Keratinocyte-associated transmembrane protein 2 (259 aa).

A signal peptide spans Met-1–Cys-44. Residues Ser-45–Asp-190 lie on the Extracellular side of the membrane. The segment at Arg-47–Glu-155 is disordered. Residues Asn-50 to Leu-81 show a composition bias toward polar residues. Residues Asn-54 and Asn-68 are each glycosylated (N-linked (GlcNAc...) asparagine). The span at Ser-82 to Ala-104 shows a compositional bias: low complexity. Acidic residues predominate over residues Pro-105 to Leu-122. Phosphoserine is present on Ser-165. A helical membrane pass occupies residues Ser-191 to Tyr-211. Topologically, residues His-212–Phe-259 are cytoplasmic. Ser-223 and Ser-250 each carry phosphoserine.

The protein localises to the membrane. This is Keratinocyte-associated transmembrane protein 2 (Kct2) from Mus musculus (Mouse).